A 433-amino-acid chain; its full sequence is C2H2 type master regulator of conidiophore development brlA (433 aa).

2 disordered regions span residues 23-64 (PSEC…SHYH) and 240-265 (KTHTPSTPHRSVSMGTPSGSDTPVSR). Residues 30-48 (TSSFSPLDSPTPTPTSLYS) are compositionally biased toward low complexity. The segment covering 240–264 (KTHTPSTPHRSVSMGTPSGSDTPVS) has biased composition (polar residues). 2 C2H2-type zinc fingers span residues 321–345 (FKCKEPGCKGRFKRQEHLKRHMKSH) and 351–376 (HVCWIPGCHRAFSRSDNLNAHYTKTH). The segment at 391 to 416 (ETSQDFDPDFRGQLTPDGRPIYGSKL) is disordered.

It localises to the nucleus. Functionally, brlA, abaA and wetA are pivotal regulators of conidiophore development and conidium maturation. They act individually and together to regulate their own expression and that of numerous other sporulation-specific genes. Binds promoters of target genes at brlA response elements (BREs) containing the conserved sequence 5'-(C/A)(A/G)AGGG(G/A)-3'. Is not required for penicillin V production. This Penicillium rubens (strain ATCC 28089 / DSM 1075 / NRRL 1951 / Wisconsin 54-1255) (Penicillium chrysogenum) protein is C2H2 type master regulator of conidiophore development brlA.